Here is a 162-residue protein sequence, read N- to C-terminus: Cytochrome c-type biogenesis protein CcmE (162 aa).

The Cytoplasmic segment spans residues 1–13 (MSFWPQSRKARRR). Residues 14-34 (LTILLAIAPVLALAVGLALYG) form a helical; Signal-anchor for type II membrane protein membrane-spanning segment. Over 35–162 (LRDSISLFYT…DAPAYGSQKP (128 aa)) the chain is Periplasmic. Heme contacts are provided by His-128 and Tyr-132. Residues 140–151 (ALKEQGEWRGEG) are compositionally biased toward basic and acidic residues. Positions 140–162 (ALKEQGEWRGEGADAPAYGSQKP) are disordered.

Belongs to the CcmE/CycJ family.

The protein localises to the cell inner membrane. Heme chaperone required for the biogenesis of c-type cytochromes. Transiently binds heme delivered by CcmC and transfers the heme to apo-cytochromes in a process facilitated by CcmF and CcmH. This chain is Cytochrome c-type biogenesis protein CcmE, found in Caulobacter vibrioides (strain ATCC 19089 / CIP 103742 / CB 15) (Caulobacter crescentus).